The chain runs to 294 residues: Shikimate kinase (294 aa).

87-97 (PLAGGLKSSSA) serves as a coordination point for ATP.

The protein belongs to the GHMP kinase family. Archaeal shikimate kinase subfamily.

The protein localises to the cytoplasm. It carries out the reaction shikimate + ATP = 3-phosphoshikimate + ADP + H(+). It participates in metabolic intermediate biosynthesis; chorismate biosynthesis; chorismate from D-erythrose 4-phosphate and phosphoenolpyruvate: step 5/7. The chain is Shikimate kinase (aroK) from Methanosarcina acetivorans (strain ATCC 35395 / DSM 2834 / JCM 12185 / C2A).